We begin with the raw amino-acid sequence, 181 residues long: MIPISESTNTLLFVVLEFAILVGALGVVLLSRVIYSALLLGFVFICVALLYLLLNADFLAAAQVLIYVGAVNVLIVFAIMLVSTPDDVKNKPKTTGEIISAFTFIALFVLLTIMIFTTSWDTHHNLATQDEVLLQPLMSNVQTIGFHLLTDLLFPFELLSLLLLVALVGAITIASKNKITE.

5 helical membrane-spanning segments follow: residues 10–30 (TLLF…VVLL), 33–53 (VIYS…LYLL), 62–82 (AQVL…IMLV), 98–118 (IISA…IFTT), and 153–173 (LFPF…AITI).

The protein belongs to the complex I subunit 6 family. NDH is composed of at least 16 different subunits, 5 of which are encoded in the nucleus.

It is found in the plastid. The protein localises to the chloroplast thylakoid membrane. It carries out the reaction a plastoquinone + NADH + (n+1) H(+)(in) = a plastoquinol + NAD(+) + n H(+)(out). It catalyses the reaction a plastoquinone + NADPH + (n+1) H(+)(in) = a plastoquinol + NADP(+) + n H(+)(out). Its function is as follows. NDH shuttles electrons from NAD(P)H:plastoquinone, via FMN and iron-sulfur (Fe-S) centers, to quinones in the photosynthetic chain and possibly in a chloroplast respiratory chain. The immediate electron acceptor for the enzyme in this species is believed to be plastoquinone. Couples the redox reaction to proton translocation, and thus conserves the redox energy in a proton gradient. This chain is NAD(P)H-quinone oxidoreductase subunit 6, chloroplastic (ndhG), found in Zygnema circumcarinatum (Green alga).